We begin with the raw amino-acid sequence, 654 residues long: Bifunctional polymyxin resistance protein ArnA (654 aa).

The formyltransferase ArnAFT stretch occupies residues 1-303 (MKVIVFAYHE…NISRIKGKKL (303 aa)). His105 (proton donor; for formyltransferase activity) is an active-site residue. 137 to 141 (TKKID) is a (6R)-10-formyltetrahydrofolate binding site. Positions 313-654 (NLKKILILGV…INFFINNNTS (342 aa)) are dehydrogenase ArnADH. NAD(+) contacts are provided by residues Asp346 and 367–368 (DI). Residues Ala392, Tyr397, and 431–432 (TS) contribute to the UDP-alpha-D-glucuronate site. Glu433 acts as the Proton acceptor; for decarboxylase activity in catalysis. Residues Arg459, Asn491, 532–534 (QKR), and Tyr612 contribute to the UDP-alpha-D-glucuronate site. Arg618 serves as the catalytic Proton donor; for decarboxylase activity.

The protein in the N-terminal section; belongs to the Fmt family. UDP-L-Ara4N formyltransferase subfamily. This sequence in the C-terminal section; belongs to the NAD(P)-dependent epimerase/dehydratase family. UDP-glucuronic acid decarboxylase subfamily. In terms of assembly, homohexamer, formed by a dimer of trimers.

It carries out the reaction UDP-alpha-D-glucuronate + NAD(+) = UDP-beta-L-threo-pentopyranos-4-ulose + CO2 + NADH. The catalysed reaction is UDP-4-amino-4-deoxy-beta-L-arabinose + (6R)-10-formyltetrahydrofolate = UDP-4-deoxy-4-formamido-beta-L-arabinose + (6S)-5,6,7,8-tetrahydrofolate + H(+). It participates in nucleotide-sugar biosynthesis; UDP-4-deoxy-4-formamido-beta-L-arabinose biosynthesis; UDP-4-deoxy-4-formamido-beta-L-arabinose from UDP-alpha-D-glucuronate: step 1/3. Its pathway is nucleotide-sugar biosynthesis; UDP-4-deoxy-4-formamido-beta-L-arabinose biosynthesis; UDP-4-deoxy-4-formamido-beta-L-arabinose from UDP-alpha-D-glucuronate: step 3/3. It functions in the pathway bacterial outer membrane biogenesis; lipopolysaccharide biosynthesis. Bifunctional enzyme that catalyzes the oxidative decarboxylation of UDP-glucuronic acid (UDP-GlcUA) to UDP-4-keto-arabinose (UDP-Ara4O) and the addition of a formyl group to UDP-4-amino-4-deoxy-L-arabinose (UDP-L-Ara4N) to form UDP-L-4-formamido-arabinose (UDP-L-Ara4FN). The modified arabinose is attached to lipid A and is required for resistance to polymyxin and cationic antimicrobial peptides. The sequence is that of Bifunctional polymyxin resistance protein ArnA from Wigglesworthia glossinidia brevipalpis.